The following is a 1297-amino-acid chain: DNA-directed RNA polymerase subunit beta'' (1297 aa).

Zn(2+) contacts are provided by C220, C293, C300, and C303. Over residues R1278–K1288 the composition is skewed to basic residues. Positions R1278 to K1297 are disordered.

The protein belongs to the RNA polymerase beta' chain family. RpoC2 subfamily. In terms of assembly, in plastids the minimal PEP RNA polymerase catalytic core is composed of four subunits: alpha, beta, beta', and beta''. When a (nuclear-encoded) sigma factor is associated with the core the holoenzyme is formed, which can initiate transcription. Zn(2+) serves as cofactor.

It localises to the plastid. The protein resides in the chloroplast. The catalysed reaction is RNA(n) + a ribonucleoside 5'-triphosphate = RNA(n+1) + diphosphate. Its function is as follows. DNA-dependent RNA polymerase catalyzes the transcription of DNA into RNA using the four ribonucleoside triphosphates as substrates. The polypeptide is DNA-directed RNA polymerase subunit beta'' (Welwitschia mirabilis (Tree tumbo)).